The sequence spans 106 residues: SH3 domain-binding glutamic acid-rich-like protein 2-B (106 aa).

The short motif at 61-67 (QGNPLPP) is the SH3-binding element.

It belongs to the SH3BGR family.

Its subcellular location is the nucleus. This chain is SH3 domain-binding glutamic acid-rich-like protein 2-B (sh3bgrl2-b), found in Xenopus laevis (African clawed frog).